Consider the following 433-residue polypeptide: Glutamate-1-semialdehyde 2,1-aminomutase (433 aa).

Residue Lys267 is modified to N6-(pyridoxal phosphate)lysine.

Belongs to the class-III pyridoxal-phosphate-dependent aminotransferase family. HemL subfamily. In terms of assembly, homodimer. Pyridoxal 5'-phosphate is required as a cofactor.

It is found in the cytoplasm. It carries out the reaction (S)-4-amino-5-oxopentanoate = 5-aminolevulinate. Its pathway is porphyrin-containing compound metabolism; protoporphyrin-IX biosynthesis; 5-aminolevulinate from L-glutamyl-tRNA(Glu): step 2/2. This Syntrophobacter fumaroxidans (strain DSM 10017 / MPOB) protein is Glutamate-1-semialdehyde 2,1-aminomutase.